Reading from the N-terminus, the 317-residue chain is E3 ubiquitin-protein ligase NRDP1 (317 aa).

The RING-type; degenerate zinc-finger motif lies at 18 to 57 (CPICSGVLEEPVQAPHCEHAFCNACITQWFSQQQTCPVDR). Residues 135–175 (IKHLRSVVQQQQIRIGELEKTAAESKHQLSEQKRDIQLLKA) adopt a coiled-coil conformation.

It carries out the reaction S-ubiquitinyl-[E2 ubiquitin-conjugating enzyme]-L-cysteine + [acceptor protein]-L-lysine = [E2 ubiquitin-conjugating enzyme]-L-cysteine + N(6)-ubiquitinyl-[acceptor protein]-L-lysine.. It participates in protein modification; protein ubiquitination. Functionally, acts as E3 ubiquitin-protein ligase and regulates the degradation of target proteins. The protein is E3 ubiquitin-protein ligase NRDP1 (rnf41) of Xenopus laevis (African clawed frog).